The primary structure comprises 72 residues: Translation initiation factor IF-1 (72 aa).

Residues 1–72 (MSKDDVIQMQ…SRARIVFRAK (72 aa)) form the S1-like domain.

It belongs to the IF-1 family. As to quaternary structure, component of the 30S ribosomal translation pre-initiation complex which assembles on the 30S ribosome in the order IF-2 and IF-3, IF-1 and N-formylmethionyl-tRNA(fMet); mRNA recruitment can occur at any time during PIC assembly.

The protein resides in the cytoplasm. Functionally, one of the essential components for the initiation of protein synthesis. Stabilizes the binding of IF-2 and IF-3 on the 30S subunit to which N-formylmethionyl-tRNA(fMet) subsequently binds. Helps modulate mRNA selection, yielding the 30S pre-initiation complex (PIC). Upon addition of the 50S ribosomal subunit IF-1, IF-2 and IF-3 are released leaving the mature 70S translation initiation complex. The polypeptide is Translation initiation factor IF-1 (Methylibium petroleiphilum (strain ATCC BAA-1232 / LMG 22953 / PM1)).